Here is a 335-residue protein sequence, read N- to C-terminus: 3-hydroxyproline 2-epimerase (335 aa).

The active-site Proton acceptor is the C91. Residues G92 to H93, D251, and G256 to S257 each bind substrate.

Belongs to the proline racemase family.

The enzyme catalyses trans-3-hydroxy-L-proline = cis-3-hydroxy-D-proline. It catalyses the reaction trans-4-hydroxy-L-proline = cis-4-hydroxy-D-proline. Its function is as follows. Catalyzes the epimerization of trans-3-hydroxy-L-proline (t3LHyp) to cis-3-hydroxy-D-proline (c3DHyp) in vitro. Can also catalyze the epimerization of trans-4-hydroxy-L-proline (t3LHyp) to cis-4-hydroxy-D-proline (c4DHyp), albeit with 3.6-fold lower efficiency. Displays no proline racemase activity. The sequence is that of 3-hydroxyproline 2-epimerase from Burkholderia multivorans (strain ATCC 17616 / 249).